The sequence spans 382 residues: ATP phosphoribosyltransferase regulatory subunit (382 aa).

Belongs to the class-II aminoacyl-tRNA synthetase family. HisZ subfamily. As to quaternary structure, heteromultimer composed of HisG and HisZ subunits.

It localises to the cytoplasm. The protein operates within amino-acid biosynthesis; L-histidine biosynthesis; L-histidine from 5-phospho-alpha-D-ribose 1-diphosphate: step 1/9. In terms of biological role, required for the first step of histidine biosynthesis. May allow the feedback regulation of ATP phosphoribosyltransferase activity by histidine. The polypeptide is ATP phosphoribosyltransferase regulatory subunit (Burkholderia lata (strain ATCC 17760 / DSM 23089 / LMG 22485 / NCIMB 9086 / R18194 / 383)).